We begin with the raw amino-acid sequence, 953 residues long: Coatomer subunit beta (953 aa).

T2 is modified (N-acetylthreonine). HEAT repeat units follow at residues 96-131 (HEMILVCDAYRKDLQHPNEFIRGSTLRFLCKLKEAE), 132-168 (LLEPLMPAIRACLEHRHSYVRRNAVLAIYTIYRNFEH), 240-276 (SERARFIRCIYNLLQSSSPAVKYEAAGTLVTLSSAPT), 277-314 (AIKAAAQCYIDLIIKESDNNVKLIVLDRLVELKEHPAH), 316-353 (RVLQDLVMDILRVLSTPDLEVRKKTLQLALDLVSSRNV), and 396-433 (DMAANVIPVLMEFLSDSNEAAAADVLEFVREAIQRFDN). N6-acetyllysine is present on K494.

In terms of assembly, oligomeric complex that consists of at least the alpha, beta, beta', gamma, delta, epsilon and zeta subunits. Interacts with CAPN8. Interacts with SCYL1 and PRKCE. Interacts with COPG1. Interacts with ARF1 (myristoylated); this interaction is required for binding of COPB1 to Golgi membranes. Interacts (via trunk domain) with ARF1 (via switch I region); the interaction is direct. Interacts with KCNK2 (via N-terminus); this interaction increases the channel-mediated whole cell currents and promotes plasma membrane expression of KCNK2. Interacts with STX17. Interacts with TMEM115. Interacts with TMEM41B. Post-translationally, proteolytically cleaved between Ser-528 and Ser-529 by CAPN8. In terms of tissue distribution, predominantly expressed in the upper one-third of the oxyntic mucosa and in most regions of the pyloric mucosa. Ubiquitously expressed including platelet, liver, heart, spleen, lung and kidney.

It localises to the cytoplasm. It is found in the golgi apparatus membrane. Its subcellular location is the cytoplasmic vesicle. The protein localises to the COPI-coated vesicle membrane. The protein resides in the cell membrane. It localises to the endoplasmic reticulum-Golgi intermediate compartment. In terms of biological role, the coatomer is a cytosolic protein complex that binds to dilysine motifs and reversibly associates with Golgi non-clathrin-coated vesicles, which further mediate biosynthetic protein transport from the ER, via the Golgi up to the trans Golgi network. Coatomer complex is required for budding from Golgi membranes, and is essential for the retrograde Golgi-to-ER transport of dilysine-tagged proteins. In mammals, the coatomer can only be recruited by membranes associated to ADP-ribosylation factors (ARFs), which are small GTP-binding proteins; the complex also influences the Golgi structural integrity, as well as the processing, activity, and endocytic recycling of LDL receptors. Involved in the Golgi disassembly and reassembly processes during cell cycle. Involved in autophagy by playing a role in early endosome function. Plays a role in organellar compartmentalization of secretory compartments including endoplasmic reticulum (ER)-Golgi intermediate compartment (ERGIC), Golgi, trans-Golgi network (TGN) and recycling endosomes, and in biosynthetic transport of CAV1. Plays a functional role in facilitating the transport of kappa-type opioid receptor mRNAs into axons and enhances translation of these proteins in cortical neurons. Required for limiting lipid storage in lipid droplets. Involved in lipid homeostasis by regulating the presence of perilipin family members PLIN2 and PLIN3 at the lipid droplet surface and promoting the association of adipocyte triglyceride lipase (PNPLA2) with the lipid droplet surface to mediate lipolysis. The protein is Coatomer subunit beta (Copb1) of Mus musculus (Mouse).